The sequence spans 324 residues: Methionyl-tRNA formyltransferase (324 aa).

Position 112-115 (112-115 (SILP)) interacts with (6S)-5,6,7,8-tetrahydrofolate.

It belongs to the Fmt family.

It catalyses the reaction L-methionyl-tRNA(fMet) + (6R)-10-formyltetrahydrofolate = N-formyl-L-methionyl-tRNA(fMet) + (6S)-5,6,7,8-tetrahydrofolate + H(+). In terms of biological role, attaches a formyl group to the free amino group of methionyl-tRNA(fMet). The formyl group appears to play a dual role in the initiator identity of N-formylmethionyl-tRNA by promoting its recognition by IF2 and preventing the misappropriation of this tRNA by the elongation apparatus. This is Methionyl-tRNA formyltransferase from Shewanella loihica (strain ATCC BAA-1088 / PV-4).